The following is a 495-amino-acid chain: Oxidoreductase AflY (495 aa).

Residues Met-1 to Thr-22 are disordered.

The protein belongs to the questin oxidase family.

Its pathway is mycotoxin biosynthesis; aflatoxin biosynthesis. Functionally, oxidoreductase; part of the gene cluster that mediates the biosynthesis of aflatoxins, a group of polyketide-derived furanocoumarins, and part of the most toxic and carcinogenic compounds among the known mycotoxins. The four major aflatoxins produced by A.parasiticus are aflatoxin B1 (AFB1), aflatoxin B2 (AFB2), aflatoxin G1 (AFG1) and aflatoxin G2 (AFG2). Within the aflatoxin pathway, the oxidoreductase aflY seems to be involved in the conversion of versicolorin A (VERA) to demethylsterigmatocystin (DMST), through probable Baeyer-Villiger oxidation required for the formation of the xanthone ring. The biosynthesis of aflatoxins begins with the norsolorinic acid synthase aflC that combines a hexanoyl starter unit produced by the fatty acid synthase aflA/aflB and 7 malonyl-CoA extender units to synthesize the precursor NOR. The second step is the conversion of NOR to averantin and requires the norsolorinic acid ketoreductase aflD, which catalyzes the dehydration of norsolorinic acid to form (1'S)-averantin. The norsolorinic acid reductases aflE and aflF may also play a role in the conversion of NOR to AVN. The cytochrome P450 monooxygenase aflG then catalyzes the hydroxylation of AVN to 5'hydroxyaverantin (HAVN). The next step is performed by the 5'-hydroxyaverantin dehydrogenase aflH that transforms HAVN to 5'-oxoaverantin (OAVN) which is further converted to averufin (AVF) by aflK that plays a dual role in the pathway, as a 5'-oxoaverantin cyclase that mediates conversion of 5'-oxoaverantin, as well as a versicolorin B synthase in a later step in the pathway. The averufin oxidase aflI catalyzes the conversion of AVF to versiconal hemiacetal acetate (VHA). VHA is then the substrate for the versiconal hemiacetal acetate esterase aflJ to yield versiconal (VAL). Versicolorin B synthase aflK then converts VAL to versicolorin B (VERB) by closing the bisfuran ring of aflatoxin which is required for DNA-binding, thus giving to aflatoxin its activity as a mutagen. Then, the activity of the versicolorin B desaturase aflL leads to versicolorin A (VERA). A branch point starts from VERB since it can also be converted to dihydrodemethylsterigmatocystin (DMDHST), probably also by aflL, VERA being a precursor for aflatoxins B1 and G1, and DMDHST for aflatoxins B2 and G2. Next, the versicolorin reductase aflM and the cytochrome P450 monooxygenase aflN are involved in conversion of VERA to demethylsterigmatocystin (DMST). AflX and aflY seem also involved in this step, through probable aflX-mediated epoxide ring-opening step following versicolorin A oxidation and aflY-mediated Baeyer-Villiger oxidation required for the formation of the xanthone ring. The methyltransferase aflO then leads to the modification of DMST to sterigmatocystin (ST), and of DMDHST to dihydrosterigmatocystin (DHST). Both ST and DHST are then substrates of the O-methyltransferase aflP to yield O-methylsterigmatocystin (OMST) and dihydro-O-methylsterigmatocystin (DHOMST), respectively. Finally OMST is converted to aflatoxins B1 and G1, and DHOMST to aflatoxins B2 and G2, via the action of several enzymes including O-methylsterigmatocystin oxidoreductase aflQ, the cytochrome P450 monooxygenase aflU, but also the NADH-dependent flavin oxidoreductase nadA which is specifically required for the synthesis of AFG1. This Aspergillus parasiticus (strain ATCC 56775 / NRRL 5862 / SRRC 143 / SU-1) protein is Oxidoreductase AflY.